Reading from the N-terminus, the 398-residue chain is uncharacterized protein (398 aa).

The chain crosses the membrane as a helical span at residues 88-108; the sequence is IGFTIGFAIFFILLFLLSNMV.

To B.megaterium SpoIV.

Its subcellular location is the cell membrane. This is an uncharacterized protein from Bacillus subtilis (strain 168).